The chain runs to 274 residues: NADPH-dependent 7-cyano-7-deazaguanine reductase (274 aa).

A substrate-binding site is contributed by 80–82; it reads VES. NADPH is bound at residue 82–83; the sequence is SK. Catalysis depends on Cys181, which acts as the Thioimide intermediate. Asp188 functions as the Proton donor in the catalytic mechanism. Residue 220-221 participates in substrate binding; it reads HE. An NADPH-binding site is contributed by 249–250; sequence RG.

The protein belongs to the GTP cyclohydrolase I family. QueF type 2 subfamily. In terms of assembly, homodimer.

The protein localises to the cytoplasm. The enzyme catalyses 7-aminomethyl-7-carbaguanine + 2 NADP(+) = 7-cyano-7-deazaguanine + 2 NADPH + 3 H(+). It participates in tRNA modification; tRNA-queuosine biosynthesis. Its function is as follows. Catalyzes the NADPH-dependent reduction of 7-cyano-7-deazaguanine (preQ0) to 7-aminomethyl-7-deazaguanine (preQ1). This Burkholderia thailandensis (strain ATCC 700388 / DSM 13276 / CCUG 48851 / CIP 106301 / E264) protein is NADPH-dependent 7-cyano-7-deazaguanine reductase.